Reading from the N-terminus, the 275-residue chain is MTNATPTPVIVTGAAGKMGREVIKAVVQADDLRLYAAVDRNPDVFSLDAGELVGLDTLNIELTNELEPVLAAAAQEKQPCVMVDFTHPSSVYSNIRSAIAYGVFPVIGTTGLSDEQMNDLTEFTEKASMGCLVIPNFSIGMVLLQQAAVQASQYFDHVEIIELHHNQKADAPSGTAVKTAQLLGDLGKTYNPALVEEKEHLAGARGSLGSENIRIHSIRLPGLIAHQEVLFGAPGQLYTLRHDTSDRACYMPGVLLSIRKVTQLQTLSYGLEKIL.

NAD(+) is bound by residues 13 to 18 (GAAGKM) and 108 to 110 (GTT). The Proton donor/acceptor role is filled by His164. His165 is a binding site for (S)-2,3,4,5-tetrahydrodipicolinate. The active-site Proton donor is the Lys168. 174-175 (GT) is a (S)-2,3,4,5-tetrahydrodipicolinate binding site.

It belongs to the DapB family.

It localises to the cytoplasm. The enzyme catalyses (S)-2,3,4,5-tetrahydrodipicolinate + NAD(+) + H2O = (2S,4S)-4-hydroxy-2,3,4,5-tetrahydrodipicolinate + NADH + H(+). The catalysed reaction is (S)-2,3,4,5-tetrahydrodipicolinate + NADP(+) + H2O = (2S,4S)-4-hydroxy-2,3,4,5-tetrahydrodipicolinate + NADPH + H(+). The protein operates within amino-acid biosynthesis; L-lysine biosynthesis via DAP pathway; (S)-tetrahydrodipicolinate from L-aspartate: step 4/4. Catalyzes the conversion of 4-hydroxy-tetrahydrodipicolinate (HTPA) to tetrahydrodipicolinate. The chain is 4-hydroxy-tetrahydrodipicolinate reductase from Acaryochloris marina (strain MBIC 11017).